A 186-amino-acid polypeptide reads, in one-letter code: GPI-anchored hemophore ARB_02741 (186 aa).

Positions 1-18 are cleaved as a signal peptide; sequence MKFSQAVIALAAATVVSA. In terms of domain architecture, CFEM spans 19 to 108; that stretch reads QLPDVPQCSL…SSKPSEPSTS (90 aa). Cystine bridges form between Cys26–Cys67, Cys30–Cys62, Cys40–Cys48, and Cys50–Cys83. Asp45 contributes to the heme binding site. The tract at residues 89 to 159 is disordered; sequence PVSIPPVEES…NTGVPTQSTP (71 aa). Residues 96–131 are compositionally biased toward low complexity; that stretch reads EESSSKPSEPSTSEAPTASPTESTPAPTTPAPTGTG. Positions 132-144 are enriched in gly residues; that stretch reads SPSGTGAPGGPSG. The segment covering 148–159 has biased composition (polar residues); sequence FTNTGVPTQSTP. The GPI-anchor amidated glycine moiety is linked to residue Gly163. Positions 164-186 are cleaved as a propeptide — removed in mature form; sequence AASGLSANIGGMGAAILAIAAYL.

It belongs to the RBT5 family. Post-translationally, the GPI-anchor is attached to the protein in the endoplasmic reticulum and serves to target the protein to the cell surface. There, the glucosamine-inositol phospholipid moiety is cleaved off and the GPI-modified mannoprotein is covalently attached via its lipidless GPI glycan remnant to the 1,6-beta-glucan of the outer cell wall layer.

It is found in the secreted. Its subcellular location is the cell wall. The protein resides in the cell membrane. Its function is as follows. GPI-anchored cell wall protein involved in stabilizing the cell wall. In Arthroderma benhamiae (strain ATCC MYA-4681 / CBS 112371) (Trichophyton mentagrophytes), this protein is GPI-anchored hemophore ARB_02741.